Here is a 455-residue protein sequence, read N- to C-terminus: Putative PTS system EIIBC component YbbF (455 aa).

In terms of domain architecture, PTS EIIB type-1 spans 8–90 (HHLAQKILEL…SKLVSAEEGA (83 aa)). Cys30 acts as the Phosphocysteine intermediate; for EIIB activity in catalysis. In terms of domain architecture, PTS EIIC type-1 spans 116–455 (RKIASIFIPL…YKDEMASQFD (340 aa)). 10 helical membrane-spanning segments follow: residues 118 to 138 (IASIFIPLIPALVASGLITGI), 154 to 174 (IAIILTVIGSGLFTYLGILVG), 181 to 201 (FGGTPALGALAGILIINPEIA), 210 to 230 (LLPGRGGLIGVLFAAIFIAYT), 250 to 270 (VSLLITGIVTYVVFMPLGGFI), 281 to 301 (ILDIGGIAAGFILGATFLPLV), 325 to 345 (LLPILAMGGAGQVGAAFAVFV), 355 to 375 (AIAGGLPSGLLGIGEPLIFGV), 399 to 419 (YFQVATIAIGVSGLPLSFLVL), and 423 to 443 (IILYIVGLFISYAAGFLLTYA).

It localises to the cell membrane. Its function is as follows. The phosphoenolpyruvate-dependent sugar phosphotransferase system (sugar PTS), a major carbohydrate active -transport system, catalyzes the phosphorylation of incoming sugar substrates concomitantly with their translocation across the cell membrane. The protein is Putative PTS system EIIBC component YbbF (ybbF) of Bacillus subtilis (strain 168).